Here is a 361-residue protein sequence, read N- to C-terminus: T-box-containing protein TBX6L (361 aa).

A DNA-binding region (T-box) is located at residues 36 to 209; it reads LWMKFHQIGT…NNPFAKGFRE (174 aa). Disordered stretches follow at residues 203–259 and 280–323; these read FAKG…VKEE and HAFP…QLPS. 2 stretches are compositionally biased toward basic and acidic residues: residues 206-220 and 234-259; these read GFRE…EGRA and KLPE…VKEE. The segment covering 280–290 has biased composition (low complexity); the sequence is HAFPAASPAPA.

Its subcellular location is the nucleus. Functionally, may be involved in regulating somitogenesis. This is T-box-containing protein TBX6L (TBX6L) from Gallus gallus (Chicken).